A 368-amino-acid polypeptide reads, in one-letter code: Chaperone protein DnaJ (368 aa).

The 66-residue stretch at 5 to 70 folds into the J domain; the sequence is DYYQVLGVPR…KKRKLYDTHG (66 aa). A CR-type zinc finger spans residues 124-201; that stretch reads GVERQIQIPT…CNGAGRVEDH (78 aa). Cysteine 137, cysteine 140, cysteine 153, cysteine 156, cysteine 175, cysteine 178, cysteine 189, and cysteine 192 together coordinate Zn(2+). 4 CXXCXGXG motif repeats span residues 137 to 144, 153 to 160, 175 to 182, and 189 to 196; these read CTHCNGSG, CGTCRGSG, CPHCGGRG, and CKVCNGAG.

The protein belongs to the DnaJ family. As to quaternary structure, homodimer. The cofactor is Zn(2+).

It is found in the cytoplasm. Participates actively in the response to hyperosmotic and heat shock by preventing the aggregation of stress-denatured proteins and by disaggregating proteins, also in an autonomous, DnaK-independent fashion. Unfolded proteins bind initially to DnaJ; upon interaction with the DnaJ-bound protein, DnaK hydrolyzes its bound ATP, resulting in the formation of a stable complex. GrpE releases ADP from DnaK; ATP binding to DnaK triggers the release of the substrate protein, thus completing the reaction cycle. Several rounds of ATP-dependent interactions between DnaJ, DnaK and GrpE are required for fully efficient folding. Also involved, together with DnaK and GrpE, in the DNA replication of plasmids through activation of initiation proteins. In Xylella fastidiosa (strain M12), this protein is Chaperone protein DnaJ.